Here is a 96-residue protein sequence, read N- to C-terminus: Large ribosomal subunit protein uL15 (96 aa).

The protein belongs to the universal ribosomal protein uL15 family. As to quaternary structure, part of the 50S ribosomal subunit.

In terms of biological role, binds to the 23S rRNA. This Streptomyces scabiei protein is Large ribosomal subunit protein uL15 (rplO).